Consider the following 204-residue polypeptide: UPF0637 protein lin1053 (204 aa).

Belongs to the UPF0637 family.

This is UPF0637 protein lin1053 from Listeria innocua serovar 6a (strain ATCC BAA-680 / CLIP 11262).